Reading from the N-terminus, the 82-residue chain is ATP synthase subunit c, chloroplastic (82 aa).

A run of 2 helical transmembrane segments spans residues 4 to 24 (IISA…AIGP) and 57 to 77 (LAFM…LLFA).

This sequence belongs to the ATPase C chain family. In terms of assembly, F-type ATPases have 2 components, F(1) - the catalytic core - and F(0) - the membrane proton channel. F(1) has five subunits: alpha(3), beta(3), gamma(1), delta(1), epsilon(1). F(0) has four main subunits: a(1), b(1), b'(1) and c(10-14). The alpha and beta chains form an alternating ring which encloses part of the gamma chain. F(1) is attached to F(0) by a central stalk formed by the gamma and epsilon chains, while a peripheral stalk is formed by the delta, b and b' chains.

Its subcellular location is the plastid. It is found in the chloroplast thylakoid membrane. Functionally, f(1)F(0) ATP synthase produces ATP from ADP in the presence of a proton or sodium gradient. F-type ATPases consist of two structural domains, F(1) containing the extramembraneous catalytic core and F(0) containing the membrane proton channel, linked together by a central stalk and a peripheral stalk. During catalysis, ATP synthesis in the catalytic domain of F(1) is coupled via a rotary mechanism of the central stalk subunits to proton translocation. In terms of biological role, key component of the F(0) channel; it plays a direct role in translocation across the membrane. A homomeric c-ring of between 10-14 subunits forms the central stalk rotor element with the F(1) delta and epsilon subunits. The protein is ATP synthase subunit c, chloroplastic of Heterosigma akashiwo (strain NIES-293 / 8280G21-1).